We begin with the raw amino-acid sequence, 122 residues long: Aspartate 1-decarboxylase (122 aa).

The active-site Schiff-base intermediate with substrate; via pyruvic acid is the Ser-25. Ser-25 bears the Pyruvic acid (Ser) mark. A substrate-binding site is contributed by Thr-57. Catalysis depends on Tyr-58, which acts as the Proton donor. 73-75 serves as a coordination point for substrate; that stretch reads GAA.

This sequence belongs to the PanD family. As to quaternary structure, heterooctamer of four alpha and four beta subunits. Pyruvate serves as cofactor. Is synthesized initially as an inactive proenzyme, which is activated by self-cleavage at a specific serine bond to produce a beta-subunit with a hydroxyl group at its C-terminus and an alpha-subunit with a pyruvoyl group at its N-terminus.

It localises to the cytoplasm. The catalysed reaction is L-aspartate + H(+) = beta-alanine + CO2. It functions in the pathway cofactor biosynthesis; (R)-pantothenate biosynthesis; beta-alanine from L-aspartate: step 1/1. In terms of biological role, catalyzes the pyruvoyl-dependent decarboxylation of aspartate to produce beta-alanine. The polypeptide is Aspartate 1-decarboxylase (Bordetella pertussis (strain Tohama I / ATCC BAA-589 / NCTC 13251)).